A 141-amino-acid chain; its full sequence is Organic hydroperoxide resistance protein-like 1 (141 aa).

Residues 1–20 (MAVNYETKATNTGGRNGHVQ) form a disordered region.

The protein belongs to the OsmC/Ohr family.

This is Organic hydroperoxide resistance protein-like 1 from Staphylococcus saprophyticus subsp. saprophyticus (strain ATCC 15305 / DSM 20229 / NCIMB 8711 / NCTC 7292 / S-41).